Here is a 47-residue protein sequence, read N- to C-terminus: Delta-actitoxin-Cgg1b (47 aa).

Proline 3 is modified (hydroxyproline). Disulfide bonds link cysteine 4/cysteine 44, cysteine 6/cysteine 34, and cysteine 27/cysteine 45.

The protein belongs to the sea anemone sodium channel inhibitory toxin family. Type I subfamily.

The protein localises to the secreted. It is found in the nematocyst. In terms of biological role, binds voltage-dependently at site 3 of sodium channels (Nav) and inhibits the inactivation, thereby blocking neuronal transmission. This is Delta-actitoxin-Cgg1b from Condylactis gigantea (Giant Caribbean anemone).